A 328-amino-acid polypeptide reads, in one-letter code: Protein FAM76B (328 aa).

Residues 143–232 (KEQRKGLGSS…ITQSMDSGGT (90 aa)) form a disordered region. A compositionally biased stretch (low complexity) spans 148 to 159 (GLGSSHSNSSSL). The segment covering 165–183 (QRHHHHHQHHRHGSSHHKI) has biased composition (basic residues). Polar residues predominate over residues 185 to 201 (GNLSPEQDQGLWKQSIQ). Phosphoserine is present on serine 188. The span at 203-213 (ETPKKKPKLET) shows a compositional bias: basic and acidic residues. The segment covering 216-232 (SNGDSSSITQSMDSGGT) has biased composition (polar residues). Residues 237 to 316 (LISQLKEEVM…KQVAALSKGK (80 aa)) adopt a coiled-coil conformation.

It belongs to the FAM76 family. Highly expressed in hematopoietic and immune systems including in the thymus, spleen, kidney, and blood vessel.

Plays a role in hematopoiesis and immune system development, and participates in the inflammatory response. This Danio rerio (Zebrafish) protein is Protein FAM76B (fam76b).